The primary structure comprises 334 residues: Cytochrome c551 peroxidase (334 aa).

Residues 1 to 26 (MIKRTLTVSLLSLSLGAMFASAGVMA) form the signal peptide. C65, C68, H69, C209, C212, H213, H270, and M284 together coordinate heme c. The disordered stretch occupies residues 315 to 334 (FKLPILPPSNNDTPRSQPYE). Residues 322 to 334 (PSNNDTPRSQPYE) show a composition bias toward polar residues.

In terms of processing, binds 2 heme c groups covalently per subunit.

It localises to the periplasm. It catalyses the reaction 2 Fe(II)-[cytochrome c] + H2O2 + 2 H(+) = 2 Fe(III)-[cytochrome c] + 2 H2O. This Nitrosomonas europaea (strain ATCC 19718 / CIP 103999 / KCTC 2705 / NBRC 14298) protein is Cytochrome c551 peroxidase (ccp).